A 159-amino-acid polypeptide reads, in one-letter code: 6,7-dimethyl-8-ribityllumazine synthase (159 aa).

5-amino-6-(D-ribitylamino)uracil-binding positions include Trp26, 57 to 59 (ALE), and 79 to 81 (CVI). 84–85 (GT) serves as a coordination point for (2S)-2-hydroxy-3-oxobutyl phosphate. Catalysis depends on His87, which acts as the Proton donor. 5-amino-6-(D-ribitylamino)uracil is bound at residue Asn112. Arg126 provides a ligand contact to (2S)-2-hydroxy-3-oxobutyl phosphate.

This sequence belongs to the DMRL synthase family.

It catalyses the reaction (2S)-2-hydroxy-3-oxobutyl phosphate + 5-amino-6-(D-ribitylamino)uracil = 6,7-dimethyl-8-(1-D-ribityl)lumazine + phosphate + 2 H2O + H(+). It participates in cofactor biosynthesis; riboflavin biosynthesis; riboflavin from 2-hydroxy-3-oxobutyl phosphate and 5-amino-6-(D-ribitylamino)uracil: step 1/2. In terms of biological role, catalyzes the formation of 6,7-dimethyl-8-ribityllumazine by condensation of 5-amino-6-(D-ribitylamino)uracil with 3,4-dihydroxy-2-butanone 4-phosphate. This is the penultimate step in the biosynthesis of riboflavin. This Corynebacterium efficiens (strain DSM 44549 / YS-314 / AJ 12310 / JCM 11189 / NBRC 100395) protein is 6,7-dimethyl-8-ribityllumazine synthase.